The primary structure comprises 226 residues: NAD(P)H-quinone oxidoreductase subunit K, chloroplastic (226 aa).

[4Fe-4S] cluster contacts are provided by Cys43, Cys44, Cys108, and Cys139.

This sequence belongs to the complex I 20 kDa subunit family. NDH is composed of at least 16 different subunits, 5 of which are encoded in the nucleus. [4Fe-4S] cluster is required as a cofactor.

Its subcellular location is the plastid. The protein resides in the chloroplast thylakoid membrane. It catalyses the reaction a plastoquinone + NADH + (n+1) H(+)(in) = a plastoquinol + NAD(+) + n H(+)(out). It carries out the reaction a plastoquinone + NADPH + (n+1) H(+)(in) = a plastoquinol + NADP(+) + n H(+)(out). Functionally, NDH shuttles electrons from NAD(P)H:plastoquinone, via FMN and iron-sulfur (Fe-S) centers, to quinones in the photosynthetic chain and possibly in a chloroplast respiratory chain. The immediate electron acceptor for the enzyme in this species is believed to be plastoquinone. Couples the redox reaction to proton translocation, and thus conserves the redox energy in a proton gradient. The sequence is that of NAD(P)H-quinone oxidoreductase subunit K, chloroplastic from Lupinus luteus (European yellow lupine).